Consider the following 93-residue polypeptide: Mammaglobin-A (93 aa).

A signal peptide spans 1–18 (MKLLMVLMLAALSQHCYA). N-linked (GlcNAc...) asparagine glycosylation is found at asparagine 53 and asparagine 68.

The protein belongs to the secretoglobin family. Lipophilin subfamily. In terms of tissue distribution, mammary gland specific. Over-expressed in breast cancer.

It is found in the secreted. The polypeptide is Mammaglobin-A (SCGB2A2) (Homo sapiens (Human)).